We begin with the raw amino-acid sequence, 63 residues long: DNA-directed RNA polymerase 7 kDa subunit (63 aa).

The protein belongs to the poxviridae DNA-directed RNA polymerase 7 kDa subunit family. The DNA-dependent RNA polymerase used for intermediate and late genes expression consists of eight subunits 147 kDa, 133 kDa, 35 kDa, 30 kDa, 22 kDa, 19 kDa, 18 kDa and 7 kDa totalling more than 500 kDa in mass. The same holoenzyme, with the addition of the transcription-specificity factor RAP94, is used for early gene expression.

The protein resides in the virion. It catalyses the reaction RNA(n) + a ribonucleoside 5'-triphosphate = RNA(n+1) + diphosphate. Part of the DNA-dependent RNA polymerase which catalyzes the transcription of viral DNA into RNA using the four ribonucleoside triphosphates as substrates. Responsible for the transcription of early, intermediate and late genes. DNA-dependent RNA polymerase associates with the early transcription factor (ETF) thereby allowing the early genes transcription. Late transcription, and probably also intermediate transcription, require newly synthesized RNA polymerase. This chain is DNA-directed RNA polymerase 7 kDa subunit (RPO7), found in Rabbit fibroma virus (strain Kasza) (RFV).